Reading from the N-terminus, the 543-residue chain is CTP synthase (543 aa).

Residues 1–265 (MTRFVFITGG…DQEVLRYFDL (265 aa)) form an amidoligase domain region. Residue Ser13 coordinates CTP. Ser13 provides a ligand contact to UTP. An ATP-binding site is contributed by 14-19 (SLGKGI). Residue Tyr54 coordinates L-glutamine. ATP is bound at residue Asp71. Mg(2+)-binding residues include Asp71 and Glu139. CTP is bound by residues 146-148 (DIE), 186-191 (KTKPTQ), and Lys222. Residues 186-191 (KTKPTQ) and Lys222 each bind UTP. The Glutamine amidotransferase type-1 domain occupies 291–542 (RVAIVGKYTA…IAAAVKEAHR (252 aa)). Gly354 contributes to the L-glutamine binding site. Cys381 acts as the Nucleophile; for glutamine hydrolysis in catalysis. L-glutamine is bound by residues 382–385 (FGMQ), Glu405, and Arg470. Catalysis depends on residues His515 and Glu517.

Belongs to the CTP synthase family. As to quaternary structure, homotetramer.

The catalysed reaction is UTP + L-glutamine + ATP + H2O = CTP + L-glutamate + ADP + phosphate + 2 H(+). The enzyme catalyses L-glutamine + H2O = L-glutamate + NH4(+). It carries out the reaction UTP + NH4(+) + ATP = CTP + ADP + phosphate + 2 H(+). It participates in pyrimidine metabolism; CTP biosynthesis via de novo pathway; CTP from UDP: step 2/2. Its activity is regulated as follows. Allosterically activated by GTP, when glutamine is the substrate; GTP has no effect on the reaction when ammonia is the substrate. The allosteric effector GTP functions by stabilizing the protein conformation that binds the tetrahedral intermediate(s) formed during glutamine hydrolysis. Inhibited by the product CTP, via allosteric rather than competitive inhibition. Its function is as follows. Catalyzes the ATP-dependent amination of UTP to CTP with either L-glutamine or ammonia as the source of nitrogen. Regulates intracellular CTP levels through interactions with the four ribonucleotide triphosphates. The protein is CTP synthase of Gluconobacter oxydans (strain 621H) (Gluconobacter suboxydans).